The following is a 213-amino-acid chain: Small ribosomal subunit protein uS5 (213 aa).

The S5 DRBM domain occupies 54-117 (LKSETVDVRL…RNAKLNIIPV (64 aa)).

This sequence belongs to the universal ribosomal protein uS5 family. Part of the 30S ribosomal subunit. Contacts protein S4.

Its function is as follows. With S4 and S12 plays an important role in translational accuracy. The sequence is that of Small ribosomal subunit protein uS5 from Hyperthermus butylicus (strain DSM 5456 / JCM 9403 / PLM1-5).